A 113-amino-acid polypeptide reads, in one-letter code: Cell division protein FtsB (113 aa).

Residues 1 to 3 (MRL) are Cytoplasmic-facing. The helical transmembrane segment at 4 to 21 (ISLLLFVLLLAIQYPLWL) threads the bilayer. Topologically, residues 22 to 113 (GKGGWLRVWD…PNSVAGRGGH (92 aa)) are periplasmic. Positions 34-64 (RQVNEQTVHNQALKLRNAKLEGEVKDLQDGT) form a coiled coil. A disordered region spans residues 93-113 (KVSATPPLPPPPNSVAGRGGH).

It belongs to the FtsB family. In terms of assembly, part of a complex composed of FtsB, FtsL and FtsQ.

It is found in the cell inner membrane. In terms of biological role, essential cell division protein. May link together the upstream cell division proteins, which are predominantly cytoplasmic, with the downstream cell division proteins, which are predominantly periplasmic. This is Cell division protein FtsB from Cupriavidus metallidurans (strain ATCC 43123 / DSM 2839 / NBRC 102507 / CH34) (Ralstonia metallidurans).